Here is a 149-residue protein sequence, read N- to C-terminus: Lipoprotein signal peptidase (149 aa).

The next 3 helical transmembrane spans lie at 24-44 (SHIALGASTSIVTGLLSLTNL), 57-77 (KMWFFYLISVIALIVMGYLLW), and 81-101 (GKWLYEVGISLMIAGTLGNFI). Residues Asp-111 and Asp-127 contribute to the active site. The chain crosses the membrane as a helical span at residues 122–142 (IFNFADSCLTVGVIFILIGVL).

Belongs to the peptidase A8 family.

It is found in the cell membrane. It catalyses the reaction Release of signal peptides from bacterial membrane prolipoproteins. Hydrolyzes -Xaa-Yaa-Zaa-|-(S,diacylglyceryl)Cys-, in which Xaa is hydrophobic (preferably Leu), and Yaa (Ala or Ser) and Zaa (Gly or Ala) have small, neutral side chains.. It functions in the pathway protein modification; lipoprotein biosynthesis (signal peptide cleavage). In terms of biological role, this protein specifically catalyzes the removal of signal peptides from prolipoproteins. This chain is Lipoprotein signal peptidase, found in Lactiplantibacillus plantarum (strain ATCC BAA-793 / NCIMB 8826 / WCFS1) (Lactobacillus plantarum).